We begin with the raw amino-acid sequence, 466 residues long: Cysteine--tRNA ligase (466 aa).

Position 28 (Cys-28) interacts with Zn(2+). Positions 30 to 40 (PTVYNYIHIGN) match the 'HIGH' region motif. 3 residues coordinate Zn(2+): Cys-208, His-233, and Glu-237. A 'KMSKS' region motif is present at residues 265-269 (KMSKS). An ATP-binding site is contributed by Lys-268.

It belongs to the class-I aminoacyl-tRNA synthetase family. Monomer. Zn(2+) serves as cofactor.

The protein resides in the cytoplasm. The catalysed reaction is tRNA(Cys) + L-cysteine + ATP = L-cysteinyl-tRNA(Cys) + AMP + diphosphate. The protein is Cysteine--tRNA ligase of Staphylococcus aureus (strain bovine RF122 / ET3-1).